A 189-amino-acid chain; its full sequence is MTDHTPLQPKHEITDQADQDTSAEMLVEEEDKKEIGPNYITEEEAQEIRLRALAEMENFKKRLQKDHDEQIRYAIDNLLTDMLPVLDSLDLAIQYGSNDDACKDILMGVSMTRKLFLDTLKQYGVTVLGEINEPFNPELHEAIAHEEREDIPEGHVSTLHQRGYQLYERLLRPAKVSVSSNKNNSNTNK.

Positions 1–14 (MTDHTPLQPKHEIT) are enriched in basic and acidic residues. A disordered region spans residues 1–23 (MTDHTPLQPKHEITDQADQDTSA).

This sequence belongs to the GrpE family. In terms of assembly, homodimer.

The protein localises to the cytoplasm. Its function is as follows. Participates actively in the response to hyperosmotic and heat shock by preventing the aggregation of stress-denatured proteins, in association with DnaK and GrpE. It is the nucleotide exchange factor for DnaK and may function as a thermosensor. Unfolded proteins bind initially to DnaJ; upon interaction with the DnaJ-bound protein, DnaK hydrolyzes its bound ATP, resulting in the formation of a stable complex. GrpE releases ADP from DnaK; ATP binding to DnaK triggers the release of the substrate protein, thus completing the reaction cycle. Several rounds of ATP-dependent interactions between DnaJ, DnaK and GrpE are required for fully efficient folding. This Lawsonia intracellularis (strain PHE/MN1-00) protein is Protein GrpE.